A 97-amino-acid polypeptide reads, in one-letter code: UPF0235 protein APP7_1431 (97 aa).

The protein belongs to the UPF0235 family.

The chain is UPF0235 protein APP7_1431 from Actinobacillus pleuropneumoniae serotype 7 (strain AP76).